The primary structure comprises 395 residues: LL-diaminopimelate aminotransferase (395 aa).

Residues Tyr-14 and Gly-41 each contribute to the substrate site. Pyridoxal 5'-phosphate-binding positions include Tyr-71, 104 to 105 (AK), Tyr-128, Asn-174, Tyr-205, and 233 to 235 (SFS). 3 residues coordinate substrate: Lys-105, Tyr-128, and Asn-174. Lys-236 carries the post-translational modification N6-(pyridoxal phosphate)lysine. Residues Arg-244 and Asn-275 each coordinate pyridoxal 5'-phosphate. Residues Asn-275 and Arg-368 each coordinate substrate.

This sequence belongs to the class-I pyridoxal-phosphate-dependent aminotransferase family. LL-diaminopimelate aminotransferase subfamily. As to quaternary structure, homodimer. The cofactor is pyridoxal 5'-phosphate.

It catalyses the reaction (2S,6S)-2,6-diaminopimelate + 2-oxoglutarate = (S)-2,3,4,5-tetrahydrodipicolinate + L-glutamate + H2O + H(+). It functions in the pathway amino-acid biosynthesis; L-lysine biosynthesis via DAP pathway; LL-2,6-diaminopimelate from (S)-tetrahydrodipicolinate (aminotransferase route): step 1/1. Functionally, involved in the synthesis of meso-diaminopimelate (m-DAP or DL-DAP), required for both lysine and peptidoglycan biosynthesis. Catalyzes the direct conversion of tetrahydrodipicolinate to LL-diaminopimelate. The sequence is that of LL-diaminopimelate aminotransferase from Chlamydia caviae (strain ATCC VR-813 / DSM 19441 / 03DC25 / GPIC) (Chlamydophila caviae).